The primary structure comprises 172 residues: Lipoprotein signal peptidase (172 aa).

3 helical membrane passes run 10–30 (LIWL…KAWV), 68–88 (WQLW…AFWL), and 98–118 (SALP…DRLM). Active-site residues include aspartate 124 and aspartate 142. Residues 138–158 (FNIADSAIVGGAIGIAVFGLF) traverse the membrane as a helical segment.

It belongs to the peptidase A8 family.

The protein resides in the cell inner membrane. The enzyme catalyses Release of signal peptides from bacterial membrane prolipoproteins. Hydrolyzes -Xaa-Yaa-Zaa-|-(S,diacylglyceryl)Cys-, in which Xaa is hydrophobic (preferably Leu), and Yaa (Ala or Ser) and Zaa (Gly or Ala) have small, neutral side chains.. It participates in protein modification; lipoprotein biosynthesis (signal peptide cleavage). Its function is as follows. This protein specifically catalyzes the removal of signal peptides from prolipoproteins. This chain is Lipoprotein signal peptidase, found in Xanthomonas euvesicatoria pv. vesicatoria (strain 85-10) (Xanthomonas campestris pv. vesicatoria).